We begin with the raw amino-acid sequence, 525 residues long: M-phase inducer phosphatase 1 (525 aa).

Positions methionine 73–phenylalanine 83 match the Phosphodegron motif. Serine 75 carries the phosphoserine; by CHEK1 modification. Phosphoserine; by NEK11 is present on residues serine 78, serine 81, and serine 87. Position 106 is a phosphoserine (serine 106). Serine 123 is modified (phosphoserine; by CHEK1 and CHEK2). Positions lysine 140–asparagine 142 match the KEN box motif. Serine 177 bears the Phosphoserine; by CHEK1 mark. 2 disordered regions span residues proline 179 to proline 204 and serine 262 to proline 308. A phosphoserine; by CHEK1 and CHEK2 mark is found at serine 279 and serine 293. The span at valine 294–glutamate 306 shows a compositional bias: low complexity. A Phosphoserine modification is found at serine 322. One can recognise a Rhodanese domain in the interval leucine 377 to glutamate 483. The active site involves cysteine 432. Threonine 508 bears the Phosphothreonine; by CHEK1 mark. Residues serine 514 and serine 520 each carry the phosphoserine; by PLK3 modification.

Belongs to the MPI phosphatase family. As to quaternary structure, interacts with CCNB1/cyclin B1. Interacts with YWHAE/14-3-3 epsilon when phosphorylated. Interacts with CUL1 specifically when CUL1 is neddylated and active. Interacts with BTRC/BTRCP1 and FBXW11/BTRCP2. Interactions with CUL1, BTRC and FBXW11 are enhanced upon DNA damage. Interacts with HSP90AB1; prevents heat shock-mediated CDC25A degradation and contributes to cell cycle progression. In terms of processing, phosphorylated by CHEK1 on Ser-75, Ser-123, Ser-177, Ser-279, Ser-293 and Thr-508 during checkpoint mediated cell cycle arrest. Also phosphorylated by CHEK2 on Ser-123, Ser-279, and Ser-293 during checkpoint mediated cell cycle arrest. Phosphorylation on Ser-177 and Thr-508 creates binding sites for YWHAE/14-3-3 epsilon which inhibits CDC25A. Phosphorylation on Ser-75, Ser-123, Ser-177, Ser-279 and Ser-293 may also promote ubiquitin-dependent proteolysis of CDC25A by the SCF complex. Phosphorylation of CDC25A at Ser-75 by CHEK1 primes it for subsequent phosphorylation at Ser-78, Ser-81 and Ser-87 by NEK11. Phosphorylation by NEK11 is required for BTRC-mediated polyubiquitination and degradation. Phosphorylation by PIM1 leads to an increase in phosphatase activity. Phosphorylated by PLK3 following DNA damage, leading to promote its ubiquitination and degradation. Post-translationally, ubiquitinated by the anaphase promoting complex/cyclosome (APC/C) ubiquitin ligase complex that contains FZR1/CDH1 during G1 phase leading to its degradation by the proteasome. Ubiquitinated by a SCF complex containing BTRC and FBXW11 during S phase leading to its degradation by the proteasome. Deubiquitination by USP17L2/DUB3 leads to its stabilization.

The catalysed reaction is O-phospho-L-tyrosyl-[protein] + H2O = L-tyrosyl-[protein] + phosphate. Its activity is regulated as follows. Stimulated by B-type cyclins. Stimulated by PIM1-mediated phosphorylation. Tyrosine protein phosphatase which functions as a dosage-dependent inducer of mitotic progression. Directly dephosphorylates CDK1 and stimulates its kinase activity. Also dephosphorylates CDK2 in complex with cyclin-E, in vitro. This chain is M-phase inducer phosphatase 1 (CDC25A), found in Bos taurus (Bovine).